Consider the following 208-residue polypeptide: Large ribosomal subunit protein bL25 (208 aa).

The segment at 178–208 is disordered; sequence LPPQQSEVPEPDSEEEPKEPEAIKEKDNDGE. The span at 186–195 shows a compositional bias: acidic residues; it reads PEPDSEEEPK. The span at 196–208 shows a compositional bias: basic and acidic residues; it reads EPEAIKEKDNDGE.

It belongs to the bacterial ribosomal protein bL25 family. CTC subfamily. As to quaternary structure, part of the 50S ribosomal subunit; part of the 5S rRNA/L5/L18/L25 subcomplex. Contacts the 5S rRNA. Binds to the 5S rRNA independently of L5 and L18.

Functionally, this is one of the proteins that binds to the 5S RNA in the ribosome where it forms part of the central protuberance. This is Large ribosomal subunit protein bL25 from Bacillus pumilus (strain SAFR-032).